We begin with the raw amino-acid sequence, 117 residues long: UPF0642 protein C32H8.05 (117 aa).

Residues 39-117 (DQVNDLTKSS…SNFSKFLKKK (79 aa)) form a disordered region. Residues 93-106 (KWAKKHLKKGKRAK) show a composition bias toward basic residues. The segment covering 107–117 (NSNFSKFLKKK) has biased composition (low complexity).

It belongs to the UPF0642 family.

The protein resides in the nucleus. It localises to the nucleolus. This chain is UPF0642 protein C32H8.05, found in Schizosaccharomyces pombe (strain 972 / ATCC 24843) (Fission yeast).